We begin with the raw amino-acid sequence, 467 residues long: Ammonium transporter Rh type C (467 aa).

Residues 1 to 9 (MAWNTNLRW) are Cytoplasmic-facing. Residues 10-30 (RLPLLCLVLEVAMVVLFGLFV) traverse the membrane as a helical segment. Residues 31–61 (RYSPDADSSWSNEKRKGNITSDLENEFYYRY) are Extracellular-facing. N48 is a glycosylation site (N-linked (GlcNAc...) asparagine). The helical transmembrane segment at 62–82 (PSFQDVHVMVFLGFGFLMTFL) threads the bilayer. The Cytoplasmic portion of the chain corresponds to 83-86 (QRYG). A helical transmembrane segment spans residues 87–107 (YCALGFNFLLAALGVQWALLM). The Extracellular segment spans residues 108–131 (QGWFQYTKDRLILLGIKNLIDADS). Helical transmembrane passes span 132 to 152 (CVASVCVAFGAVLGKVSPVQM) and 153 to 173 (LLMTFFQVALFSANEFLLLHV). The Extracellular segment spans residues 174-179 (LEVKDA). A helical membrane pass occupies residues 180–200 (GGSITIHIFGAYFGLTVTWIL). Over 201–219 (YRHNLDHSRERQSSVYHSN) the chain is Cytoplasmic. Residues 220 to 240 (LFAMIGTLFLWIYWPSFNSAM) form a helical membrane-spanning segment. Residues 241 to 251 (SNYGDAQHRAA) lie on the Extracellular side of the membrane. A helical transmembrane segment spans residues 252–272 (INTYCSLAASVLTSVAMSSVL). Over 273–282 (HKKGKLDMVH) the chain is Cytoplasmic. The chain crosses the membrane as a helical span at residues 283-303 (IQNATLAGGVGVGTAAEMMLM). P304 is a topological domain (extracellular). The helical transmembrane segment at 305-325 (YGALIVGFICGAVSTLGFVYL) threads the bilayer. Residues 326–343 (TPFLESRLRIQDTCGIHN) are Cytoplasmic-facing. The helical transmembrane segment at 344–364 (LHGIPGLIGAIVGAVTAAYAS) threads the bilayer. Residues 365-391 (PDGDRGFVYPFGFHNEKDEKVQGRFQA) are Extracellular-facing. A helical transmembrane segment spans residues 392–412 (FGLLLTLAIAMVGGTIMGLIL). Over 413–467 (KLPFWGQAMDEDCFDDSIYWEMHEEKSSSPEDHTHKPSVPTEPVEQPTSSATLAP) the chain is Cytoplasmic. Over residues 436–447 (EEKSSSPEDHTH) the composition is skewed to basic and acidic residues. Positions 436–467 (EEKSSSPEDHTHKPSVPTEPVEQPTSSATLAP) are disordered. Positions 458 to 467 (QPTSSATLAP) are enriched in polar residues.

This sequence belongs to the ammonium transporter (TC 2.A.49) family. Rh subfamily. As to quaternary structure, homotrimer. Post-translationally, N-glycosylated.

Its subcellular location is the cell membrane. It localises to the apical cell membrane. It carries out the reaction NH4(+)(in) = NH4(+)(out). The catalysed reaction is methylamine(out) = methylamine(in). It catalyses the reaction CO2(out) = CO2(in). Ammonium transporter involved in the maintenance of acid-base homeostasis. Transports ammonium and its related derivative methylammonium across the plasma membrane of epithelial cells likely contributing to renal transepithelial ammonia transport and ammonia metabolism. Postulated to primarily mediate an electroneutral bidirectional transport of NH3 ammonia species according to a mechanism that implies interaction of an NH4(+) ion with acidic residues of the pore entry followed by dissociation of NH4(+) into NH3 and H(+). As a result NH3 transits through the central pore and is protonated on the extracellular side reforming NH4(+). May act as a CO2 channel providing for renal acid secretion. The protein is Ammonium transporter Rh type C (RHCG) of Oryctolagus cuniculus (Rabbit).